The following is a 383-amino-acid chain: Insecticidal crystal protein Cry35Ab1 (383 aa).

Positions 26–138 (DDSGVSLMNK…NNPNQQWNLT (113 aa)) constitute a Ricin B-type lectin domain.

It belongs to the toxin_10 family. Monomer in solution. Copurifies from parasporal inclusion bodies with Cry34Ab1. In terms of processing, proteolytic processing occurs near the C-terminus yielding a stable protein of approximately 40 kDa; this may be the active form of the protein.

Component of a binary insecticidal toxin active on western corn rootworm (WCR, Diabrotica virgifera subsp. virgifera Le Conte) and probably also on northern corn rootworm (D.barberi). Both proteins are required for maximal toxicity. The larval midgut epithelium is probably the primary target. This protein alone has no activity against southern corn rootworm (Diabrotica undecimpunctata howardi Barber), but it synergizes the toxic effect of its Cry34Ab1 partner. The 2 proteins individually and together form ion channels; channels made in the presence of the 2 proteins have higher conductance. Binds to WCR third instar midgut brush border membrane vesicles; binding improves over 10-fold in the presence of Cry34Ab1. In Bacillus thuringiensis, this protein is Insecticidal crystal protein Cry35Ab1.